A 396-amino-acid chain; its full sequence is Phosphoglycerate kinase (396 aa).

Residues 21–23 (DFN), Arg-36, 59–62 (HFDR), Arg-118, and Arg-151 contribute to the substrate site. Residues Lys-201, Glu-323, and 353–356 (GGDT) contribute to the ATP site.

This sequence belongs to the phosphoglycerate kinase family. In terms of assembly, monomer.

Its subcellular location is the cytoplasm. The enzyme catalyses (2R)-3-phosphoglycerate + ATP = (2R)-3-phospho-glyceroyl phosphate + ADP. It participates in carbohydrate degradation; glycolysis; pyruvate from D-glyceraldehyde 3-phosphate: step 2/5. This chain is Phosphoglycerate kinase, found in Caulobacter sp. (strain K31).